Consider the following 63-residue polypeptide: Large ribosomal subunit protein uL30 (63 aa).

The protein belongs to the universal ribosomal protein uL30 family. Part of the 50S ribosomal subunit.

This Chlorobium chlorochromatii (strain CaD3) protein is Large ribosomal subunit protein uL30.